A 428-amino-acid chain; its full sequence is Protein CLP1 homolog (428 aa).

ATP is bound by residues Glu22, Lys63, and 127–132; that span reads DVGKST.

This sequence belongs to the Clp1 family. Clp1 subfamily.

The protein localises to the nucleus. In terms of biological role, required for endonucleolytic cleavage during polyadenylation-dependent pre-mRNA 3'-end formation. The polypeptide is Protein CLP1 homolog (Nematostella vectensis (Starlet sea anemone)).